The sequence spans 85 residues: Transcription factor 4 (85 aa).

A bHLH domain is found at 7–60 (ERRMANNARERLRVRDINEAFKELGRMVQLHLKSDKPQTKLLILHQAVAVILSL). A class A specific domain region spans residues 62–85 (QQVRERNLNPKAACLKRREEEKVS).

In terms of assembly, efficient DNA binding requires dimerization with another bHLH protein. Forms homo- or heterooligomers with myogenin.

It is found in the nucleus. Transcription factor that binds to the immunoglobulin enhancer Mu-E5/KE5-motif. Involved in the initiation of neuronal differentiation. Binds to the E-box present in the somatostatin receptor 2 initiator element (SSTR2-INR) to activate transcription. This chain is Transcription factor 4 (TCF4), found in Gallus gallus (Chicken).